The primary structure comprises 162 residues: Tegument protein BLRF2 (162 aa).

A coiled-coil region spans residues 12–43 (VKAVDMSMEDMAARLARLESENKALKQQVLRG). The segment at 121–162 (GAKGQPSPGEGTRLRESNDPNATRRARSRSRGREAKKVQISD) is disordered. Over residues 151–162 (RGREAKKVQISD) the composition is skewed to basic and acidic residues.

This sequence belongs to the herpesviridae BLRF2 family. In terms of assembly, homooligomer; homooligomerizes and binds double-stranded DNA (dsDNA) cooperatively. Interacts with host CGAS.

It is found in the virion tegument. It localises to the host cytoplasm. In terms of biological role, plays a role in the inhibition of host innate immune system by targeting the CGAS enzymatic activity which is the principal cytosolic DNA sensor that detects invading viral DNA. Acts by inhibiting CGAS-DNA phase separation: directly binds double-stranded DNA (dsDNA) in a length dependent but sequence independent manner and is able to form DNA-induced phase separation in infected cells. DNA phase separation of ORF52 mediates disruption of liquid-like droplets in which CGAS is activated, thereby preventing CGAS activity. The sequence is that of Tegument protein BLRF2 from Epstein-Barr virus (strain GD1) (HHV-4).